The primary structure comprises 324 residues: tRNA N6-adenosine threonylcarbamoyltransferase (324 aa).

Positions 107, 111, and 128 each coordinate Fe cation. Substrate is bound by residues 128 to 132 (YVSGG), D160, G173, E177, and N256. D284 contributes to the Fe cation binding site.

Belongs to the KAE1 / TsaD family. As to quaternary structure, monomer. Component of the KEOPS complex that consists of Kae1, Bud32, Cgi121 and Pcc1; the whole complex dimerizes. It depends on Fe(2+) as a cofactor.

It is found in the cytoplasm. It carries out the reaction L-threonylcarbamoyladenylate + adenosine(37) in tRNA = N(6)-L-threonylcarbamoyladenosine(37) in tRNA + AMP + H(+). Functionally, required for the formation of a threonylcarbamoyl group on adenosine at position 37 (t(6)A37) in tRNAs that read codons beginning with adenine. Is a component of the KEOPS complex that is probably involved in the transfer of the threonylcarbamoyl moiety of threonylcarbamoyl-AMP (TC-AMP) to the N6 group of A37. Kae1 likely plays a direct catalytic role in this reaction, but requires other protein(s) of the complex to fulfill this activity. The chain is tRNA N6-adenosine threonylcarbamoyltransferase from Methanothrix thermoacetophila (strain DSM 6194 / JCM 14653 / NBRC 101360 / PT) (Methanosaeta thermophila).